The sequence spans 252 residues: tRNA (guanine-N(1)-)-methyltransferase (252 aa).

S-adenosyl-L-methionine is bound by residues Gly113 and 133 to 138; that span reads LGDYVL.

Belongs to the RNA methyltransferase TrmD family. As to quaternary structure, homodimer.

It is found in the cytoplasm. It carries out the reaction guanosine(37) in tRNA + S-adenosyl-L-methionine = N(1)-methylguanosine(37) in tRNA + S-adenosyl-L-homocysteine + H(+). Specifically methylates guanosine-37 in various tRNAs. The polypeptide is tRNA (guanine-N(1)-)-methyltransferase (Stenotrophomonas maltophilia (strain K279a)).